Here is a 156-residue protein sequence, read N- to C-terminus: E3 ubiquitin-protein ligase RNF181 (156 aa).

Residues Cys-79–Arg-120 form an RING-type; atypical zinc finger. Positions Lys-135 to Thr-156 are disordered.

The protein belongs to the RNF181 family.

It catalyses the reaction S-ubiquitinyl-[E2 ubiquitin-conjugating enzyme]-L-cysteine + [acceptor protein]-L-lysine = [E2 ubiquitin-conjugating enzyme]-L-cysteine + N(6)-ubiquitinyl-[acceptor protein]-L-lysine.. The protein operates within protein modification; protein ubiquitination. E3 ubiquitin-protein ligase which accepts ubiquitin from an E2 ubiquitin-conjugating enzyme in the form of a thioester and then directly transfers the ubiquitin to targeted substrates. Catalyzes monoubiquitination of 26S proteasome subunit PSMC2/RPT1. The protein is E3 ubiquitin-protein ligase RNF181 (rnf181) of Danio rerio (Zebrafish).